A 509-amino-acid chain; its full sequence is ATP synthase subunit alpha (509 aa).

169–176 is a binding site for ATP; it reads GDRQTGKT.

It belongs to the ATPase alpha/beta chains family. As to quaternary structure, F-type ATPases have 2 components, CF(1) - the catalytic core - and CF(0) - the membrane proton channel. CF(1) has five subunits: alpha(3), beta(3), gamma(1), delta(1), epsilon(1). CF(0) has three main subunits: a(1), b(2) and c(9-12). The alpha and beta chains form an alternating ring which encloses part of the gamma chain. CF(1) is attached to CF(0) by a central stalk formed by the gamma and epsilon chains, while a peripheral stalk is formed by the delta and b chains.

The protein localises to the cell inner membrane. The enzyme catalyses ATP + H2O + 4 H(+)(in) = ADP + phosphate + 5 H(+)(out). Produces ATP from ADP in the presence of a proton gradient across the membrane. The alpha chain is a regulatory subunit. This chain is ATP synthase subunit alpha, found in Methylobacterium nodulans (strain LMG 21967 / CNCM I-2342 / ORS 2060).